The sequence spans 169 residues: Ribosome-binding factor A (169 aa).

The tract at residues 124–169 is disordered; it reads AGAKHAGDADPYKSDIPEDVEIDEDDFDEEDEDLIDDEELDEDGNK. Residues 128 to 139 are compositionally biased toward basic and acidic residues; that stretch reads HAGDADPYKSDI. Acidic residues predominate over residues 140 to 169; that stretch reads PEDVEIDEDDFDEEDEDLIDDEELDEDGNK.

It belongs to the RbfA family. In terms of assembly, monomer. Binds 30S ribosomal subunits, but not 50S ribosomal subunits or 70S ribosomes.

It localises to the cytoplasm. In terms of biological role, one of several proteins that assist in the late maturation steps of the functional core of the 30S ribosomal subunit. Associates with free 30S ribosomal subunits (but not with 30S subunits that are part of 70S ribosomes or polysomes). Required for efficient processing of 16S rRNA. May interact with the 5'-terminal helix region of 16S rRNA. The chain is Ribosome-binding factor A from Arthrobacter sp. (strain FB24).